The primary structure comprises 62 residues: 2-hydroxymuconate tautomerase (62 aa).

Proline 2 (proton acceptor; via imino nitrogen) is an active-site residue. Position 9-12 (9-12 (LEGR)) interacts with substrate.

It belongs to the 4-oxalocrotonate tautomerase family. In terms of assembly, homohexamer.

The enzyme catalyses (2Z,4E)-2-hydroxyhexa-2,4-dienedioate = (3E)-2-oxohex-3-enedioate. Its function is as follows. Catalyzes both 1,3- and 1,5-keto-enol tautomerization of the diacid 2-hydroxymuconate (2-hydroxy-2,4-hexadienedioate) to produce 2-oxo-4-hexenedioate. This reaction is highly stereoselective and produces a mixture of stereoisomers, where the (3S)-isomer of 2-oxo-4-hexenedioate predominates. Also catalyzes the tautomerization of 2-hydroxymuconate to 2-oxo-3-hexenedioate, however this reaction is slower and occurs after the tautomerization of 2-hydroxymuconate to 2-oxo-4-hexenedioate. Using 2-hydroxy-2,4-pentadienoate, phenylenolpyruvate, (p-hydroxyphenyl)-enolpyruvate and 2-hydroxy-2,4-heptadiene-1,7-dioate, YwhB is a highly efficient 1,3-keto-enol tautomerase, but clearly not a 1,5-keto-enol tautomerase. Tautomerization of the two monoacids 2-hydroxy-2,4-pentadienoate and phenylenolpyruvate produces a mixture of stereoisomers, where the (3R)-isomers predominate. This chain is 2-hydroxymuconate tautomerase (ywhB), found in Bacillus subtilis (strain 168).